Here is an 875-residue protein sequence, read N- to C-terminus: Phosphoenolpyruvate carboxylase (875 aa).

Catalysis depends on residues H137 and K542.

The protein belongs to the PEPCase type 1 family. Mg(2+) serves as cofactor.

It carries out the reaction oxaloacetate + phosphate = phosphoenolpyruvate + hydrogencarbonate. Forms oxaloacetate, a four-carbon dicarboxylic acid source for the tricarboxylic acid cycle. This is Phosphoenolpyruvate carboxylase from Pseudomonas entomophila (strain L48).